Here is a 332-residue protein sequence, read N- to C-terminus: tRNA dimethylallyltransferase (332 aa).

Glycine 17–serine 24 contacts ATP. Threonine 19–serine 24 provides a ligand contact to substrate. 2 interaction with substrate tRNA regions span residues aspartate 42–glutamine 45 and glutamine 166–arginine 170.

This sequence belongs to the IPP transferase family. As to quaternary structure, monomer. Requires Mg(2+) as cofactor.

The catalysed reaction is adenosine(37) in tRNA + dimethylallyl diphosphate = N(6)-dimethylallyladenosine(37) in tRNA + diphosphate. In terms of biological role, catalyzes the transfer of a dimethylallyl group onto the adenine at position 37 in tRNAs that read codons beginning with uridine, leading to the formation of N6-(dimethylallyl)adenosine (i(6)A). In Gluconacetobacter diazotrophicus (strain ATCC 49037 / DSM 5601 / CCUG 37298 / CIP 103539 / LMG 7603 / PAl5), this protein is tRNA dimethylallyltransferase.